We begin with the raw amino-acid sequence, 294 residues long: tRNA dimethylallyltransferase (294 aa).

7–14 lines the ATP pocket; that stretch reads GPTGSGKS. A substrate-binding site is contributed by 9 to 14; that stretch reads TGSGKS.

Belongs to the IPP transferase family. Monomer. Mg(2+) serves as cofactor.

The catalysed reaction is adenosine(37) in tRNA + dimethylallyl diphosphate = N(6)-dimethylallyladenosine(37) in tRNA + diphosphate. In terms of biological role, catalyzes the transfer of a dimethylallyl group onto the adenine at position 37 in tRNAs that read codons beginning with uridine, leading to the formation of N6-(dimethylallyl)adenosine (i(6)A). The chain is tRNA dimethylallyltransferase from Akkermansia muciniphila (strain ATCC BAA-835 / DSM 22959 / JCM 33894 / BCRC 81048 / CCUG 64013 / CIP 107961 / Muc).